The chain runs to 529 residues: Phenylalanine N-monooxygenase (529 aa).

A helical transmembrane segment spans residues 1–21; the sequence is MLDSTPMLAFIIGLLLLALTM. Cysteine 467 contributes to the heme binding site.

Belongs to the cytochrome P450 family. Requires heme as cofactor.

The protein localises to the endoplasmic reticulum membrane. It carries out the reaction L-phenylalanine + 2 reduced [NADPH--hemoprotein reductase] + 2 O2 = (E)-phenylacetaldehyde oxime + 2 oxidized [NADPH--hemoprotein reductase] + CO2 + 3 H2O + 2 H(+). The protein operates within secondary metabolite biosynthesis; phenylglucosinolate biosynthesis. In terms of biological role, converts L-phenylalanine into phenylacetaldoxime, the precursor of benzylglucosinolate (glucotropeolin). The sequence is that of Phenylalanine N-monooxygenase (CYP79A2) from Arabidopsis thaliana (Mouse-ear cress).